The sequence spans 720 residues: Serrate RNA effector molecule (720 aa).

Disordered regions lie at residues 1–192 (MADV…NPQR), 288–335 (LNKS…FTSD), and 361–380 (ENVLQGSETEKSGREKLHSG). A compositionally biased stretch (low complexity) spans 33–47 (SLPQQEQEQDQQQLP). Positions 48–76 (LRRERDSRERRDERDIERPPPNRRERDRS) are enriched in basic and acidic residues. 3 positions are modified to phosphoserine: serine 76, serine 90, and serine 92. The span at 99 to 115 (DRRHSPPQRRSPPQKRY) shows a compositional bias: basic residues. Basic and acidic residues-rich tracts occupy residues 116–126 (RRDDNGYDGRR) and 136–164 (PDRRFGYDHGGGYDREMGGRPGYGDERPH). Residues 288–297 (LNKSGRTSEP) are compositionally biased toward polar residues. Positions 368–378 (ETEKSGREKLH) are enriched in basic and acidic residues. The segment at 498 to 523 (YGCGAKGCTKLFHAAEFVYKHLKLKH) adopts a C2H2-type zinc-finger fold. Disordered regions lie at residues 543-622 (YMND…AFGG) and 666-687 (RDPSGPNPPFEGSGRGGPAPFL). Over residues 570-607 (PSMENRLRDDRGGRRERDGRANGNDRNDRSEDQQRGDN) the composition is skewed to basic and acidic residues. The span at 608–622 (DGGNPGEVGYDAFGG) shows a compositional bias: gly residues. Serine 689 is subject to Phosphoserine.

Belongs to the ARS2 family. As to quaternary structure, interacts with HYL1. Interacts with RCF3, RS40 and RS41. In terms of tissue distribution, expressed in shoot meristems and in emerging organ primordia throughout development.

The protein resides in the nucleus. It is found in the nucleus speckle. Functionally, acts as a mediator between the cap-binding complex (CBC) and both the pre-mRNA splicing and primary microRNAs (miRNAs) processing machinery. Required for proper processing of primary miRNAs to miRNAs, thereby playing a role in RNA-mediated gene silencing (RNAi) by miRNAs. Does not participate in sense post-transcriptional gene silencing. Acts as a regulator of meristem activity and adaxial leaf fate via the miRNA gene-silencing pathway by regulating the expression of PHB and by limiting the competence of shoot tissue to respond to KNOX expression. Its function is however not limited to miRNA-mediated repression of leaf polarity genes, but rather acts as a general regulator of primary microRNAs processing. Also critical for the accumulation of the trans-acting small interfering RNA (ta-siRNA). Required for pre-mRNA splicing. The protein is Serrate RNA effector molecule (SE) of Arabidopsis thaliana (Mouse-ear cress).